A 552-amino-acid polypeptide reads, in one-letter code: Urocanate hydratase (552 aa).

NAD(+) is bound by residues 50 to 51, Gln128, 174 to 176, Glu194, Arg199, 261 to 265, 271 to 272, and Tyr320; these read GG, GMG, QTSAH, and YI. The active site involves Cys408. NAD(+) is bound at residue Gly490.

Belongs to the urocanase family. NAD(+) is required as a cofactor.

The protein localises to the cytoplasm. It catalyses the reaction 4-imidazolone-5-propanoate = trans-urocanate + H2O. It functions in the pathway amino-acid degradation; L-histidine degradation into L-glutamate; N-formimidoyl-L-glutamate from L-histidine: step 2/3. Catalyzes the conversion of urocanate to 4-imidazolone-5-propionate. The sequence is that of Urocanate hydratase from Bdellovibrio bacteriovorus (strain ATCC 15356 / DSM 50701 / NCIMB 9529 / HD100).